A 346-amino-acid polypeptide reads, in one-letter code: Holliday junction branch migration complex subunit RuvB (346 aa).

Residues 1 to 182 (MKIELLTTPA…FGINSRFDYY (182 aa)) are large ATPase domain (RuvB-L). Residues Ile-21, Arg-22, Gly-63, Lys-66, Thr-67, Thr-68, 129 to 131 (EDF), Arg-172, Tyr-182, and Arg-219 contribute to the ATP site. Thr-67 is a binding site for Mg(2+). A small ATPAse domain (RuvB-S) region spans residues 183-253 (SPDLLEGIVM…IAMKTLECLD (71 aa)). Residues 256-346 (EEGLDDMDKK…GLFDADGNLS (91 aa)) form a head domain (RuvB-H) region. Residues Arg-311 and Arg-316 each coordinate DNA.

This sequence belongs to the RuvB family. Homohexamer. Forms an RuvA(8)-RuvB(12)-Holliday junction (HJ) complex. HJ DNA is sandwiched between 2 RuvA tetramers; dsDNA enters through RuvA and exits via RuvB. An RuvB hexamer assembles on each DNA strand where it exits the tetramer. Each RuvB hexamer is contacted by two RuvA subunits (via domain III) on 2 adjacent RuvB subunits; this complex drives branch migration. In the full resolvosome a probable DNA-RuvA(4)-RuvB(12)-RuvC(2) complex forms which resolves the HJ.

Its subcellular location is the cytoplasm. It catalyses the reaction ATP + H2O = ADP + phosphate + H(+). In terms of biological role, the RuvA-RuvB-RuvC complex processes Holliday junction (HJ) DNA during genetic recombination and DNA repair, while the RuvA-RuvB complex plays an important role in the rescue of blocked DNA replication forks via replication fork reversal (RFR). RuvA specifically binds to HJ cruciform DNA, conferring on it an open structure. The RuvB hexamer acts as an ATP-dependent pump, pulling dsDNA into and through the RuvAB complex. RuvB forms 2 homohexamers on either side of HJ DNA bound by 1 or 2 RuvA tetramers; 4 subunits per hexamer contact DNA at a time. Coordinated motions by a converter formed by DNA-disengaged RuvB subunits stimulates ATP hydrolysis and nucleotide exchange. Immobilization of the converter enables RuvB to convert the ATP-contained energy into a lever motion, pulling 2 nucleotides of DNA out of the RuvA tetramer per ATP hydrolyzed, thus driving DNA branch migration. The RuvB motors rotate together with the DNA substrate, which together with the progressing nucleotide cycle form the mechanistic basis for DNA recombination by continuous HJ branch migration. Branch migration allows RuvC to scan DNA until it finds its consensus sequence, where it cleaves and resolves cruciform DNA. The sequence is that of Holliday junction branch migration complex subunit RuvB from Chlorobium phaeovibrioides (strain DSM 265 / 1930) (Prosthecochloris vibrioformis (strain DSM 265)).